A 100-amino-acid polypeptide reads, in one-letter code: Conantokin-G (100 aa).

The signal sequence occupies residues 1-21; that stretch reads MHLYTYLYLLVPLVTFHLILG. Positions 22 to 80 are excised as a propeptide; the sequence is TGTLDDGGALTERRSADATALKAEPVLLQKSAARSTDDNGKDRLTQMKRILKQRGNKAR. The interval 52–100 is disordered; that stretch reads SAARSTDDNGKDRLTQMKRILKQRGNKARGEEELQENQELIREKSNGKR. Basic and acidic residues predominate over residues 56 to 66; it reads STDDNGKDRLT. The gamma-carboxylation recognition sequence that plays a role in the conversion of Glu to carboxy-Glu (Gla) stretch occupies residues 61–80; it reads GKDRLTQMKRILKQRGNKAR. Residue Glu83 coordinates a divalent metal cation. A 4-carboxyglutamate mark is found at Glu83, Glu84, Glu87, Glu90, and Glu94. A divalent metal cation contacts are provided by Glu87, Glu90, and Glu94. A compositionally biased stretch (basic and acidic residues) spans 90–100; the sequence is ELIREKSNGKR. At Asn97 the chain carries Asparagine amide.

Belongs to the conotoxin B superfamily. Ca(2+) is required as a cofactor. It depends on Mg(2+) as a cofactor. As to expression, expressed by the venom duct.

It localises to the secreted. In terms of biological role, conantokins inhibit N-methyl-D-aspartate (NMDA) receptors. This toxin is selective for the NR2B/GRIN2B subunit. Induces sleep-like symptoms in young mice and hyperactivity in older mice. This Conus geographus (Geography cone) protein is Conantokin-G.